Reading from the N-terminus, the 566-residue chain is Urease subunit alpha (566 aa).

The Urease domain occupies 129-566 (GGVDTHIHFI…LPLAQRYFLF (438 aa)). Ni(2+) contacts are provided by H134, H136, and K217. K217 is subject to N6-carboxylysine. A substrate-binding site is contributed by H219. Ni(2+) is bound by residues H246 and H272. The active-site Proton donor is H320. D360 provides a ligand contact to Ni(2+).

It belongs to the metallo-dependent hydrolases superfamily. Urease alpha subunit family. As to quaternary structure, heterotrimer of UreA (gamma), UreB (beta) and UreC (alpha) subunits. Three heterotrimers associate to form the active enzyme. Ni cation is required as a cofactor. Post-translationally, carboxylation allows a single lysine to coordinate two nickel ions.

It localises to the cytoplasm. It carries out the reaction urea + 2 H2O + H(+) = hydrogencarbonate + 2 NH4(+). It functions in the pathway nitrogen metabolism; urea degradation; CO(2) and NH(3) from urea (urease route): step 1/1. The protein is Urease subunit alpha of Janthinobacterium sp. (strain Marseille) (Minibacterium massiliensis).